A 744-amino-acid polypeptide reads, in one-letter code: Tripartite motif-containing protein 2 (744 aa).

Serine 10 carries the post-translational modification Phosphoserine. An RING-type zinc finger spans residues 23–64 (CSICLERYKNPKVLPCLHTFCERCLQNYIPAHSLTLSCPVCR). The B box-type zinc-finger motif lies at 113–154 (GKPLSCPNHDGNVMEFYCQSCETAMCRECTEGEHAEHPTVPL). Positions 118, 121, 141, and 146 each coordinate Zn(2+). The Filamin repeat unit spans residues 320–421 (TTNAVASETV…IRGSPFKLKV (102 aa)). Threonine 371 carries the phosphothreonine modification. Serine 375, serine 424, and serine 428 each carry phosphoserine. The disordered stretch occupies residues 432–462 (EGVKRRVKSPGSGHVKQKAVKRPASMYSTGK). 6 NHL repeats span residues 473 to 516 (IFRV…FSND), 520 to 563 (KSRF…FSSD), 564 to 605 (GKFK…FQPN), 609 to 652 (VTRF…FNQE), 656 to 699 (MLKF…FDGS), and 700 to 743 (GSFL…YRYL).

It belongs to the TRIM/RBCC family. In terms of assembly, forms homooligomers. Interacts with TRIM3; this interaction reduces TRIM2 activity. Interacts with myosin V; myosin V may not be a substrate for ubiquitination. Interacts with NEFL. Interacts with phosphorylated BCL2L11. Interacts with SIRPA. RING-type zinc finger-dependent and UBE2D1-dependent autoubiquitination.

The protein localises to the cytoplasm. The catalysed reaction is S-ubiquitinyl-[E2 ubiquitin-conjugating enzyme]-L-cysteine + [acceptor protein]-L-lysine = [E2 ubiquitin-conjugating enzyme]-L-cysteine + N(6)-ubiquitinyl-[acceptor protein]-L-lysine.. It functions in the pathway protein modification; protein ubiquitination. Its function is as follows. UBE2D1-dependent E3 ubiquitin-protein ligase that mediates the ubiquitination of NEFL and of phosphorylated BCL2L11. Plays a neuroprotective function. May play a role in neuronal rapid ischemic tolerance. Plays a role in antiviral immunity and limits New World arenavirus infection independently of its ubiquitin ligase activity. This is Tripartite motif-containing protein 2 (TRIM2) from Callithrix jacchus (White-tufted-ear marmoset).